The primary structure comprises 75 residues: UPF0352 protein ETA_12580 (75 aa).

This sequence belongs to the UPF0352 family.

The chain is UPF0352 protein ETA_12580 from Erwinia tasmaniensis (strain DSM 17950 / CFBP 7177 / CIP 109463 / NCPPB 4357 / Et1/99).